Consider the following 201-residue polypeptide: 3-isopropylmalate dehydratase small subunit (201 aa).

It belongs to the LeuD family. LeuD type 1 subfamily. In terms of assembly, heterodimer of LeuC and LeuD.

It catalyses the reaction (2R,3S)-3-isopropylmalate = (2S)-2-isopropylmalate. The protein operates within amino-acid biosynthesis; L-leucine biosynthesis; L-leucine from 3-methyl-2-oxobutanoate: step 2/4. In terms of biological role, catalyzes the isomerization between 2-isopropylmalate and 3-isopropylmalate, via the formation of 2-isopropylmaleate. The chain is 3-isopropylmalate dehydratase small subunit from Xanthobacter autotrophicus (strain ATCC BAA-1158 / Py2).